The chain runs to 433 residues: Amino-acid acetyltransferase (433 aa).

The region spanning 287 to 426 (ELVREAAIED…ASLYNYQRNS (140 aa)) is the N-acetyltransferase domain.

The protein belongs to the acetyltransferase family. ArgA subfamily.

It localises to the cytoplasm. It catalyses the reaction L-glutamate + acetyl-CoA = N-acetyl-L-glutamate + CoA + H(+). Its pathway is amino-acid biosynthesis; L-arginine biosynthesis; N(2)-acetyl-L-ornithine from L-glutamate: step 1/4. The sequence is that of Amino-acid acetyltransferase from Pseudomonas fluorescens (strain SBW25).